The following is a 443-amino-acid chain: MEKTYHFTGIKGSGMSALALMLHQMGKNVQGSDSTDYFFTQRGLEQVGVPLLPFDEKNIKPEFELIIGNAFRDDNNVEIAFAHKNGFPFKRYHEFLGHFMEDFTSIGVAGAHGKTSTTGMLAHVMSNIVDTSYLIGDGTGRGNAGSEYFVFESDEYERHFMPYHPEYTIMTNIDFDHPDYFEGIEDVTSAFQDYANNIKKGIFAYGEDVNLRKLSAKAPIYYYGFEANDDYRAENLIRNTRGSSFDAYFRGEKIGHFVVPAYGKHNVLNALSVVAVCHNLGLDMTDVADHLLTFRGVKRRFTEKKVGETVIIDDFAHHPTEIEATLDAARQKYPDREIVAVFQPHTFTRTIAFADEFAEVLDHADTVYLAQIYGSAREVDHHEITAQDLADKVRKPAKVIELDNVSPLLDHDRGVYVFMGAGNIQKYEIAFEKLLSQTSTNLQ.

Residue 110–116 (GAHGKTS) participates in ATP binding.

It belongs to the MurCDEF family.

The protein resides in the cytoplasm. It catalyses the reaction UDP-N-acetyl-alpha-D-muramate + L-alanine + ATP = UDP-N-acetyl-alpha-D-muramoyl-L-alanine + ADP + phosphate + H(+). Its pathway is cell wall biogenesis; peptidoglycan biosynthesis. Cell wall formation. The polypeptide is UDP-N-acetylmuramate--L-alanine ligase (Lactococcus lactis subsp. cremoris (strain SK11)).